A 245-amino-acid chain; its full sequence is Enolase-phosphatase E1 (245 aa).

It belongs to the HAD-like hydrolase superfamily. MasA/MtnC family. As to quaternary structure, monomer. Mg(2+) is required as a cofactor.

It carries out the reaction 5-methylsulfanyl-2,3-dioxopentyl phosphate + H2O = 1,2-dihydroxy-5-(methylsulfanyl)pent-1-en-3-one + phosphate. Its pathway is amino-acid biosynthesis; L-methionine biosynthesis via salvage pathway; L-methionine from S-methyl-5-thio-alpha-D-ribose 1-phosphate: step 3/6. It functions in the pathway amino-acid biosynthesis; L-methionine biosynthesis via salvage pathway; L-methionine from S-methyl-5-thio-alpha-D-ribose 1-phosphate: step 4/6. Functionally, bifunctional enzyme that catalyzes the enolization of 2,3-diketo-5-methylthiopentyl-1-phosphate (DK-MTP-1-P) into the intermediate 2-hydroxy-3-keto-5-methylthiopentenyl-1-phosphate (HK-MTPenyl-1-P), which is then dephosphorylated to form the acireductone 1,2-dihydroxy-3-keto-5-methylthiopentene (DHK-MTPene). The sequence is that of Enolase-phosphatase E1 from Parasynechococcus marenigrum (strain WH8102).